A 320-amino-acid polypeptide reads, in one-letter code: Annexin A5 (320 aa).

The residue at position 2 (Ala2) is an N-acetylalanine. Annexin repeat units lie at residues 15-86 (FDER…ALMK), 87-158 (PSRL…VLLQ), 170-242 (AQVE…AVVK), and 246-317 (SIPA…LLCG). Residue Lys29 forms a Glycyl lysine isopeptide (Lys-Gly) (interchain with G-Cter in SUMO1); alternate linkage. Lys29 is covalently cross-linked (Glycyl lysine isopeptide (Lys-Gly) (interchain with G-Cter in SUMO2); alternate). Phosphoserine is present on Ser37. Lys70, Lys76, Lys79, Lys97, and Lys101 each carry N6-acetyllysine. Lys290 is subject to N6-succinyllysine. The [IL]-x-C-x-x-[DE] motif signature appears at 314–320 (LLCGGED).

Belongs to the annexin family. Monomer. Binds ATRX and EIF5B. Post-translationally, S-nitrosylation is induced by interferon-gamma and oxidatively-modified low-densitity lipoprotein (LDL(ox)) possibly implicating the iNOS-S100A8/9 transnitrosylase complex.

In terms of biological role, this protein is an anticoagulant protein that acts as an indirect inhibitor of the thromboplastin-specific complex, which is involved in the blood coagulation cascade. This chain is Annexin A5 (ANXA5), found in Macaca fascicularis (Crab-eating macaque).